The following is a 245-amino-acid chain: MLIIPAIDLKDGNCVRLRQGLMDDSTVFGEDPVAFARQWVDKGARRLHLVDLNGAFAGKPVNGDVVTAIAKAFPELPIQIGGGIRSAETIEHYLQAGVNYVIIGTKAVKEPEFVTEMCKQFAGHIIVGLDAKNGFVATDGWAEVSEVKATDLAARFASDGVTEIVYTDIARDGMMQGVNVEATVDMAKASPIPVIASGGITDMNDIRALAKVASAGISGAITGRAIYEGTLDIVEAQAYCDIVSD.

Asp-8 acts as the Proton acceptor in catalysis. Catalysis depends on Asp-130, which acts as the Proton donor.

Belongs to the HisA/HisF family.

It is found in the cytoplasm. The enzyme catalyses 1-(5-phospho-beta-D-ribosyl)-5-[(5-phospho-beta-D-ribosylamino)methylideneamino]imidazole-4-carboxamide = 5-[(5-phospho-1-deoxy-D-ribulos-1-ylimino)methylamino]-1-(5-phospho-beta-D-ribosyl)imidazole-4-carboxamide. Its pathway is amino-acid biosynthesis; L-histidine biosynthesis; L-histidine from 5-phospho-alpha-D-ribose 1-diphosphate: step 4/9. The chain is 1-(5-phosphoribosyl)-5-[(5-phosphoribosylamino)methylideneamino] imidazole-4-carboxamide isomerase from Teredinibacter turnerae (strain ATCC 39867 / T7901).